A 303-amino-acid polypeptide reads, in one-letter code: Digeranylgeranylglyceryl phosphate synthase (303 aa).

Helical transmembrane passes span 23–43 (VLGVIAGAALLGEVNVAAAIA), 88–108 (LALALLALGPLLGLAVGPLTG), 130–150 (LPGNLAVSFSTASTLLYGSLA), 164–184 (TIPIILMVFLMTLAREVVKGV), 206–228 (FALRAALALACASLALAYLAAPL), 232–254 (GYAFLAFVTLGGLLSLASVAACL), and 272–292 (VAMFLGLIGILVDRLVQPVFY).

Belongs to the UbiA prenyltransferase family. DGGGP synthase subfamily. Mg(2+) is required as a cofactor.

The protein resides in the cell membrane. It carries out the reaction sn-3-O-(geranylgeranyl)glycerol 1-phosphate + (2E,6E,10E)-geranylgeranyl diphosphate = 2,3-bis-O-(geranylgeranyl)-sn-glycerol 1-phosphate + diphosphate. It participates in membrane lipid metabolism; glycerophospholipid metabolism. Functionally, prenyltransferase that catalyzes the transfer of the geranylgeranyl moiety of geranylgeranyl diphosphate (GGPP) to the C2 hydroxyl of (S)-3-O-geranylgeranylglyceryl phosphate (GGGP). This reaction is the second ether-bond-formation step in the biosynthesis of archaeal membrane lipids. The sequence is that of Digeranylgeranylglyceryl phosphate synthase from Ignicoccus hospitalis (strain KIN4/I / DSM 18386 / JCM 14125).